The primary structure comprises 101 residues: ATP-dependent Clp protease adapter protein ClpS 1 (101 aa).

Belongs to the ClpS family. Binds to the N-terminal domain of the chaperone ClpA.

Functionally, involved in the modulation of the specificity of the ClpAP-mediated ATP-dependent protein degradation. The sequence is that of ATP-dependent Clp protease adapter protein ClpS 1 from Bradyrhizobium diazoefficiens (strain JCM 10833 / BCRC 13528 / IAM 13628 / NBRC 14792 / USDA 110).